The following is a 2944-amino-acid chain: Collagen alpha-1(VII) chain (2944 aa).

Positions 1–16 (MTLRLLVAALCAGILA) are cleaved as a signal peptide. The nonhelical region (NC1) stretch occupies residues 17 to 1253 (EAPRVRAQHR…PEPCPVYCPK (1237 aa)). The VWFA 1 domain occupies 38–211 (DIVFLLDGSS…SILRTLLPLV (174 aa)). 9 consecutive Fibronectin type-III domains span residues 234–329 (APRD…TALE), 330–416 (GPEL…TDAS), 417–507 (VEQT…PELP), 510–597 (PVTD…EPET), 600–687 (AVPG…DPLG), 688–775 (PVRT…APEP), 778–866 (RVSR…PPEA), 869–957 (ALGT…SPRV), and 958–1051 (PSIE…CPRG). N-linked (GlcNAc...) asparagine glycosylation is present at N337. The interval 632 to 651 (STGSGPESSQTLPPDSTATD) is disordered. N786 carries N-linked (GlcNAc...) asparagine glycosylation. One can recognise a VWFA 2 domain in the interval 1054 to 1229 (DVVFLPHATQ…PSLDQAVSGL (176 aa)). The N-linked (GlcNAc...) asparagine glycan is linked to N1109. 2 short sequence motifs (cell attachment site) span residues 1170-1172 (RGD) and 1334-1336 (RGD). Disordered stretches follow at residues 1239–1941 (TTQP…SVPN), 1963–2782 (WDES…EKGE), and 2837–2872 (SHAE…PWDS). The tract at residues 1254–1477 (GQKGEPGEMG…GPRGPPGAIG (224 aa)) is interrupted collagenous region. The tract at residues 1254-2784 (GQKGEPGEMG…GPRGEKGEAA (1531 aa)) is triple-helical region. Positions 1336–1346 (DPGERGPRGPK) are enriched in basic and acidic residues. Positions 1355 to 1365 (VIGGEGPGLPG) are enriched in gly residues. The segment covering 1399–1408 (KGDKGDRGER) has biased composition (basic and acidic residues). The span at 1429 to 1440 (PGSPGPQGPVGP) shows a compositional bias: pro residues. The segment covering 1574–1583 (RGPPGLVLPG) has biased composition (low complexity). Basic and acidic residues-rich tracts occupy residues 1630-1642 (RGRD…KGDE), 1669-1683 (VGEK…EDGR), and 1715-1733 (AREK…RGPK). Low complexity predominate over residues 1786 to 1802 (KPGAAGPSGPNGAAGKA). The segment covering 1852–1877 (EDGRKGEKGDSGASGREGRDGPKGER) has biased composition (basic and acidic residues). The span at 1886–1897 (QGPPGLPGPVGP) shows a compositional bias: pro residues. Positions 1898-1911 (PGQGFPGVPGGTGP) are enriched in gly residues. Over residues 1974–1984 (PERRRGPKGDS) the composition is skewed to basic and acidic residues. The Cell attachment site signature appears at 2008 to 2010 (RGD). 4-hydroxyproline is present on residues P2036 and P2039. The span at 2046-2055 (GRAGGVGEAG) shows a compositional bias: gly residues. Residues 2056–2074 (RPGERGERGEKGERGEQGR) are compositionally biased toward basic and acidic residues. Pro residues predominate over residues 2078–2092 (PGLPGTPGPPGPPGP). 4-hydroxyproline is present on residues P2084, P2087, and P2090. Residues 2127–2143 (PKGDRGVPGIKGDRGEP) are compositionally biased toward basic and acidic residues. A 4-hydroxyproline mark is found at P2167, P2176, P2185, and P2188. Low complexity-rich tracts occupy residues 2191–2206 (PGLA…SGLK) and 2235–2250 (SGLV…PGQV). Basic and acidic residues predominate over residues 2328-2346 (AKGDRGLPGPRGEKGEAGR). Residues 2387-2406 (VKGDLGLPGLPGAPGVVGFP) are compositionally biased toward low complexity. Positions 2438 to 2448 (PLGPPGPPGSV) are enriched in pro residues. 2 stretches are compositionally biased toward basic and acidic residues: residues 2471–2486 (RGER…DGRP) and 2534–2570 (AKGD…EPGD). A Cell attachment site motif is present at residues 2553–2555 (RGD). The span at 2573–2601 (SAGLPGLRGLLGPQGQPGAAGIPGDPGSP) shows a compositional bias: low complexity. 5-hydroxylysine; alternate occurs at positions 2625 and 2631. K2625 and K2631 each carry an O-linked (Gal...) hydroxylysine; alternate glycan. 3 positions are modified to 4-hydroxyproline: P2664, P2667, and P2673. A compositionally biased stretch (gly residues) spans 2704 to 2713 (GTPGIGGFPG). The span at 2749-2762 (GERVVGAPGVPGAP) shows a compositional bias: low complexity. Positions 2785–2944 (LTEDDIRGFV…QSQGTGTAQD (160 aa)) are nonhelical region (NC2). Basic and acidic residues predominate over residues 2837 to 2847 (SHAEEEERVPP). Residues 2848–2872 (EDDEYSEYSEYSVEEYQDPEAPWDS) are compositionally biased toward acidic residues. Residues 2872–2944 (SDDPCSLPLD…QSQGTGTAQD (73 aa)) enclose the BPTI/Kunitz inhibitor domain. Cystine bridges form between C2876/C2929, C2885/C2912, and C2904/C2925.

Homotrimer. Interacts with MIA3/TANGO1; facilitating its loading into transport carriers and subsequent secretion. Post-translationally, prolines at the third position of the tripeptide repeating unit (G-X-Y) are hydroxylated in some or all of the chains.

It localises to the secreted. The protein resides in the extracellular space. Its subcellular location is the extracellular matrix. The protein localises to the basement membrane. In terms of biological role, stratified squamous epithelial basement membrane protein that forms anchoring fibrils which may contribute to epithelial basement membrane organization and adherence by interacting with extracellular matrix (ECM) proteins such as type IV collagen. The chain is Collagen alpha-1(VII) chain (COL7A1) from Homo sapiens (Human).